Consider the following 862-residue polypeptide: Genome polyprotein (862 aa).

A lipid anchor (N-myristoyl glycine; by host) is attached at G2.

This sequence belongs to the picornaviruses polyprotein family. As to quaternary structure, interacts with capsid protein VP1 and capsid protein VP3 to form heterotrimeric protomers. Interacts with capsid protein VP0, and capsid protein VP3 to form heterotrimeric protomers. Five protomers subsequently associate to form pentamers which serve as building blocks for the capsid. Interacts with capsid protein VP2, capsid protein VP3 and capsid protein VP4 following cleavage of capsid protein VP0. In terms of assembly, interacts with capsid protein VP1 and capsid protein VP3 in the mature capsid. As to quaternary structure, interacts with capsid protein VP0 and capsid protein VP1 to form heterotrimeric protomers. Five protomers subsequently associate to form pentamers which serve as building blocks for the capsid. Interacts with capsid protein VP4 in the mature capsid. Interacts with protein 2C; this interaction may be important for virion morphogenesis. Interacts with capsid protein VP1 and capsid protein VP3. Specific enzymatic cleavages in vivo by the viral proteases yield processing intermediates and the mature proteins. Post-translationally, myristoylation is required for the formation of pentamers during virus assembly. Further assembly of 12 pentamers and a molecule of genomic RNA generates the provirion. In terms of processing, during virion maturation, immature virions are rendered infectious following cleavage of VP0 into VP4 and VP2. This maturation seems to be an autocatalytic event triggered by the presence of RNA in the capsid and it is followed by a conformational change infectious virion. Myristoylation is required during RNA encapsidation and formation of the mature virus particle.

The protein resides in the virion. It is found in the host cytoplasm. Its function is as follows. Forms an icosahedral capsid of pseudo T=3 symmetry with capsid proteins VP2 and VP3. The capsid is 300 Angstroms in diameter, composed of 60 copies of each capsid protein and enclosing the viral positive strand RNA genome. Capsid protein VP1 mainly forms the vertices of the capsid. Capsid protein VP1 interacts with host cell receptor to provide virion attachment to target host cells. This attachment induces virion internalization. Tyrosine kinases are probably involved in the entry process. After binding to its receptor, the capsid undergoes conformational changes. Capsid protein VP1 N-terminus (that contains an amphipathic alpha-helix) and capsid protein VP4 are externalized. Together, they shape a pore in the host membrane through which viral genome is translocated to host cell cytoplasm. Forms an icosahedral capsid of pseudo T=3 symmetry with capsid proteins VP2 and VP3. The capsid is 300 Angstroms in diameter, composed of 60 copies of each capsid protein and enclosing the viral positive strand RNA genome. Functionally, lies on the inner surface of the capsid shell. After binding to the host receptor, the capsid undergoes conformational changes. Capsid protein VP4 is released, Capsid protein VP1 N-terminus is externalized, and together, they shape a pore in the host membrane through which the viral genome is translocated into the host cell cytoplasm. In terms of biological role, component of immature procapsids, which is cleaved into capsid proteins VP4 and VP2 after maturation. Allows the capsid to remain inactive before the maturation step. The protein is Genome polyprotein of Echovirus 16 (strain Harrington).